Consider the following 229-residue polypeptide: Uracil-DNA glycosylase (229 aa).

The active-site Proton acceptor is the aspartate 64.

This sequence belongs to the uracil-DNA glycosylase (UDG) superfamily. UNG family.

The protein localises to the cytoplasm. The enzyme catalyses Hydrolyzes single-stranded DNA or mismatched double-stranded DNA and polynucleotides, releasing free uracil.. In terms of biological role, excises uracil residues from the DNA which can arise as a result of misincorporation of dUMP residues by DNA polymerase or due to deamination of cytosine. The chain is Uracil-DNA glycosylase from Shigella flexneri serotype 5b (strain 8401).